A 257-amino-acid chain; its full sequence is ECF RNA polymerase sigma factor SigE (257 aa).

A sigma-70 factor domain-2 region spans residues 87–153; sequence MPSWDELVRQ…RITTNLFLDM (67 aa). Residues 111 to 114 carry the Polymerase core binding motif; the sequence is NQHD. Residues 186-236 form a sigma-70 factor domain-4 region; sequence SRLGADLQAALDSLPPEFRAAVVLCDIEGLSYEEIGATLGVKLGTVRSRIH. A DNA-binding region (H-T-H motif) is located at residues 211–230; sequence DIEGLSYEEIGATLGVKLGT.

It belongs to the sigma-70 factor family. ECF subfamily. In terms of assembly, interacts transiently with the RNA polymerase catalytic core formed by RpoA, RpoB, RpoC and RpoZ (2 alpha, 1 beta, 1 beta' and 1 omega subunit) to form the RNA polymerase holoenzyme that can initiate transcription. Interacts (via sigma-70 factor domain 4) with RseA; interaction is abrogated by treatment of cells with H(2)O(2) or detergent.

Its function is as follows. Sigma factors are initiation factors that promote the attachment of RNA polymerase to specific initiation sites and are then released. Extracytoplasmic function (ECF) sigma factors are held in an inactive form by an anti-sigma factor until released. This chain is ECF RNA polymerase sigma factor SigE (sigE), found in Mycolicibacterium smegmatis (strain ATCC 700084 / mc(2)155) (Mycobacterium smegmatis).